Here is a 324-residue protein sequence, read N- to C-terminus: Delta-aminolevulinic acid dehydratase (324 aa).

Zn(2+) contacts are provided by cysteine 120, cysteine 122, and cysteine 130. Residue lysine 195 is the Schiff-base intermediate with substrate of the active site. 5-aminolevulinate is bound by residues arginine 205 and arginine 217. Glutamate 233 is a Mg(2+) binding site. Residue lysine 248 is the Schiff-base intermediate with substrate of the active site. Positions 274 and 313 each coordinate 5-aminolevulinate.

The protein belongs to the ALAD family. As to quaternary structure, homooctamer. It depends on Zn(2+) as a cofactor.

It catalyses the reaction 2 5-aminolevulinate = porphobilinogen + 2 H2O + H(+). Its pathway is porphyrin-containing compound metabolism; protoporphyrin-IX biosynthesis; coproporphyrinogen-III from 5-aminolevulinate: step 1/4. Functionally, catalyzes an early step in the biosynthesis of tetrapyrroles. Binds two molecules of 5-aminolevulinate per subunit, each at a distinct site, and catalyzes their condensation to form porphobilinogen. This chain is Delta-aminolevulinic acid dehydratase (hemB), found in Bacillus subtilis (strain 168).